A 110-amino-acid polypeptide reads, in one-letter code: UPF0060 membrane protein MT2717 (110 aa).

The next 4 helical transmembrane spans lie at 6 to 26 (ILLF…VWQG), 32 to 52 (GWLW…FATL), 61 to 81 (VLAA…MALD), and 90 to 110 (VIGA…PRGH).

It belongs to the UPF0060 family.

Its subcellular location is the cell membrane. This chain is UPF0060 membrane protein MT2717, found in Mycobacterium tuberculosis (strain CDC 1551 / Oshkosh).